A 641-amino-acid polypeptide reads, in one-letter code: Bifunctional protein glk (641 aa).

The segment at 1 to 340 (MSTGAQTKAA…QLSNRTGGAS (340 aa)) is glucokinase. 23–28 (ADVGGT) serves as a coordination point for ATP. Residues 341-417 (SAVFERIRQM…LKLATGLTGT (77 aa)) form the HTH rpiR-type domain. The putative HTH-type transcriptional regulator stretch occupies residues 341–641 (SAVFERIRQM…SHGAAPAAKD (301 aa)). The H-T-H motif DNA-binding region spans 377–396 (IVDIARKADVSQPTVIRFCR). An SIS domain is found at 461-600 (AIDILNNARR…AVGVAIRRAA (140 aa)). The chain crosses the membrane as a helical span at residues 576–596 (SMISRILHLVMIDILAVGVAI).

This sequence in the N-terminal section; belongs to the bacterial glucokinase family.

It is found in the membrane. The enzyme catalyses D-glucose + ATP = D-glucose 6-phosphate + ADP + H(+). This is Bifunctional protein glk (glk) from Burkholderia pseudomallei (strain 1710b).